The primary structure comprises 1288 residues: Mitogen-activated protein kinase kinase kinase 6 (1288 aa).

One can recognise a Protein kinase domain in the interval 648-906 (TGERLVLGKG…AQTLLGDPFL (259 aa)). ATP-binding positions include 654–662 (LGKGTYGVV) and K677. D771 serves as the catalytic Proton acceptor. Position 806 is a phosphothreonine (T806). The disordered stretch occupies residues 899-997 (TLLGDPFLQP…SSGLSLLHQE (99 aa)). Residues 914-952 (SPSSPRHAPRPSDAPSASPTPSANSTTQSQTFPCPQAPS) are compositionally biased toward low complexity. Phosphoserine occurs at positions 964 and 984. Residues 980-989 (EEPASPEESS) are compositionally biased toward low complexity. Residues 1004 to 1029 (LAAVLEQELPALAENLHQEQKQEQGA) are a coiled coil. Basic and acidic residues predominate over residues 1123-1134 (VEKEAVSPRSEE). The tract at residues 1123-1157 (VEKEAVSPRSEELSNEGDSQQSPGQQSPLPVEPEQ) is disordered. Residues S1129 and S1149 each carry the phosphoserine modification. The segment covering 1141–1151 (SQQSPGQQSPL) has biased composition (low complexity). Residues 1166-1205 (LSLLRAETDRLREILAGKEREYQALVQRALQRLNEEARTY) are a coiled coil.

The protein belongs to the protein kinase superfamily. STE Ser/Thr protein kinase family. MAP kinase kinase kinase subfamily. Binds both upstream activators and downstream substrates in multimolecular complexes. Requires Mg(2+) as cofactor.

It carries out the reaction L-seryl-[protein] + ATP = O-phospho-L-seryl-[protein] + ADP + H(+). The enzyme catalyses L-threonyl-[protein] + ATP = O-phospho-L-threonyl-[protein] + ADP + H(+). With respect to regulation, activated by phosphorylation on Thr-806. Catalytically active only when complexed with MAP3K5, with MAP3K5 supporting the stability and the active configuration of MAP3K6 and MAP3K6 activating MAP3K5 by direct phosphorylation. Functionally, component of a protein kinase signal transduction cascade. Activates the JNK, but not ERK or p38 kinase pathways. The chain is Mitogen-activated protein kinase kinase kinase 6 (MAP3K6) from Homo sapiens (Human).